A 257-amino-acid polypeptide reads, in one-letter code: K88 minor fimbrial subunit FaeJ (257 aa).

The first 26 residues, 1–26, serve as a signal peptide directing secretion; sequence MLNIIHRLKSGMFPALFFLTSASVLA.

It localises to the fimbrium. Its function is as follows. K88 minor fimbrial subunit, plays an essential role in the biogenesis of the K88 fimbriae. Fimbriae (also called pili), are polar filaments radiating from the surface of the bacterium to a length of 0.5-1.5 micrometers and numbering 100-300 per cell. They enable bacteria to colonize the epithelium of specific host organs. This is K88 minor fimbrial subunit FaeJ (faeJ) from Escherichia coli.